The chain runs to 252 residues: Phosphate import ATP-binding protein PstB (252 aa).

One can recognise an ABC transporter domain in the interval M5–I247. G37–S44 contributes to the ATP binding site.

Belongs to the ABC transporter superfamily. Phosphate importer (TC 3.A.1.7) family. The complex is composed of two ATP-binding proteins (PstB), two transmembrane proteins (PstC and PstA) and a solute-binding protein (PstS).

The protein localises to the cell inner membrane. The enzyme catalyses phosphate(out) + ATP + H2O = ADP + 2 phosphate(in) + H(+). Part of the ABC transporter complex PstSACB involved in phosphate import. Responsible for energy coupling to the transport system. This chain is Phosphate import ATP-binding protein PstB, found in Bartonella quintana (strain Toulouse) (Rochalimaea quintana).